A 280-amino-acid chain; its full sequence is 2-dehydro-3-deoxyphosphooctonate aldolase (280 aa).

The protein belongs to the KdsA family.

Its subcellular location is the cytoplasm. The enzyme catalyses D-arabinose 5-phosphate + phosphoenolpyruvate + H2O = 3-deoxy-alpha-D-manno-2-octulosonate-8-phosphate + phosphate. It participates in carbohydrate biosynthesis; 3-deoxy-D-manno-octulosonate biosynthesis; 3-deoxy-D-manno-octulosonate from D-ribulose 5-phosphate: step 2/3. The protein operates within bacterial outer membrane biogenesis; lipopolysaccharide biosynthesis. This chain is 2-dehydro-3-deoxyphosphooctonate aldolase, found in Colwellia psychrerythraea (strain 34H / ATCC BAA-681) (Vibrio psychroerythus).